We begin with the raw amino-acid sequence, 82 residues long: Photosystem I iron-sulfur center (82 aa).

4Fe-4S ferredoxin-type domains follow at residues 2–31 and 40–69; these read AHSV…MVPW and IAAA…IRVY. Residues C11, C14, C17, C21, C49, C52, C55, and C59 each contribute to the [4Fe-4S] cluster site.

In terms of assembly, the cyanobacterial PSI reaction center is composed of one copy each of PsaA,B,C,D,E,F,I,J,K,L,M and X, and forms trimeric complexes. Requires [4Fe-4S] cluster as cofactor.

The protein localises to the cellular thylakoid membrane. It catalyses the reaction reduced [plastocyanin] + hnu + oxidized [2Fe-2S]-[ferredoxin] = oxidized [plastocyanin] + reduced [2Fe-2S]-[ferredoxin]. Its function is as follows. Apoprotein for the two 4Fe-4S centers FA and FB of photosystem I (PSI); essential for photochemical activity. FB is the terminal electron acceptor of PSI, donating electrons to ferredoxin. The C-terminus interacts with PsaA/B/D and helps assemble the protein into the PSI complex. Required for binding of PsaD and PsaE to PSI. PSI is a plastocyanin/cytochrome c6-ferredoxin oxidoreductase, converting photonic excitation into a charge separation, which transfers an electron from the donor P700 chlorophyll pair to the spectroscopically characterized acceptors A0, A1, FX, FA and FB in turn. The chain is Photosystem I iron-sulfur center from Synechococcus sp. (strain JA-2-3B'a(2-13)) (Cyanobacteria bacterium Yellowstone B-Prime).